The following is a 518-amino-acid chain: Beta-secretase 2 (518 aa).

The first 20 residues, 1-20, serve as a signal peptide directing secretion; the sequence is MGALARALLLPLLAQWLLRA. A propeptide spanning residues 21 to 62 is cleaved from the precursor; it reads APELAPAPFTLPLRVAAATNRVVAPTPGPGTPAERHADGLAL. The Extracellular segment spans residues 21–473; that stretch reads APELAPAPFT…SEPILWIVSY (453 aa). The region spanning 92–429 is the Peptidase A1 domain; the sequence is YYLEMLIGTP…DRAQKRVGFA (338 aa). The active site involves Asp110. The N-linked (GlcNAc...) asparagine glycan is linked to Asn170. Intrachain disulfides connect Cys233–Cys433, Cys292–Cys457, and Cys344–Cys393. Asp303 is an active-site residue. The N-linked (GlcNAc...) asparagine glycan is linked to Asn366. Residues 474-494 traverse the membrane as a helical segment; it reads ALMSVCGAILLVLIVLLLLPF. The Cytoplasmic segment spans residues 495–518; sequence RCQRRPRDPEVVNDESSLVRHRWK.

Belongs to the peptidase A1 family. As to quaternary structure, monomer. Interacts with RTN3 and RTN4. Post-translationally, undergoes autoproteolytic cleavage. In terms of processing, glycosylated. Brain. Present in neurons within the hippocampus, frontal cortex and temporal cortex (at protein level). Expressed at low levels in most peripheral tissues and at higher levels in colon, kidney, pancreas, placenta, prostate, stomach and trachea. Expressed at low levels in the brain. Found in spinal cord, medulla oblongata, substantia nigra and locus coruleus. Expressed in the ductal epithelium of both normal and malignant prostate.

Its subcellular location is the cell membrane. The protein resides in the golgi apparatus. It is found in the endoplasmic reticulum. It localises to the endosome. The protein localises to the melanosome. It catalyses the reaction Broad endopeptidase specificity. Cleaves Glu-Val-Asn-Leu-|-Asp-Ala-Glu-Phe in the Swedish variant of Alzheimer's amyloid precursor protein.. Its function is as follows. Responsible for the proteolytic processing of the amyloid precursor protein (APP). Cleaves APP, between residues 690 and 691, leading to the generation and extracellular release of beta-cleaved soluble APP, and a corresponding cell-associated C-terminal fragment which is later released by gamma-secretase. It has also been shown that it can cleave APP between residues 671 and 672. Involved in the proteolytic shedding of PMEL at early stages of melanosome biogenesis. Cleaves PMEL within the M-beta fragment to release the amyloidogenic PMEL luminal fragment containing M-alpha and a small portion of M-beta N-terminus. This is a prerequisite step for subsequent processing and assembly of PMEL fibrils into amyloid sheets. Responsible also for the proteolytic processing of CLTRN in pancreatic beta cells. This Homo sapiens (Human) protein is Beta-secretase 2 (BACE2).